The primary structure comprises 233 residues: Protein-L-isoaspartate O-methyltransferase (233 aa).

The active site involves Ser83.

The protein belongs to the methyltransferase superfamily. L-isoaspartyl/D-aspartyl protein methyltransferase family.

It localises to the cytoplasm. It catalyses the reaction [protein]-L-isoaspartate + S-adenosyl-L-methionine = [protein]-L-isoaspartate alpha-methyl ester + S-adenosyl-L-homocysteine. Its function is as follows. Catalyzes the methyl esterification of L-isoaspartyl residues in peptides and proteins that result from spontaneous decomposition of normal L-aspartyl and L-asparaginyl residues. It plays a role in the repair and/or degradation of damaged proteins. This is Protein-L-isoaspartate O-methyltransferase from Opitutus terrae (strain DSM 11246 / JCM 15787 / PB90-1).